Here is a 61-residue protein sequence, read N- to C-terminus: Temporin-ALi (61 aa).

Residues 1 to 22 (MFPLKKSLLLLFFLATINLSLC) form the signal peptide. Residues 23–46 (EQERNAEEERRDEPDERNAEVEKR) constitute a propeptide that is removed on maturation. The residue at position 59 (leucine 59) is a Leucine amide.

The protein belongs to the frog skin active peptide (FSAP) family. Temporin subfamily. As to expression, expressed by the skin glands.

The protein resides in the secreted. In terms of biological role, antimicrobial peptide with activity against Gram-positive and Gram-negative bacteria and against fungi. Has been tested against S.aureus (MIC=7.5 ug/mL), B.pumilus (MIC=7.5 ug/mL), B.cereus (MIC=75.0 ug/mL), E.coli (MIC=7.5 ug/mL), B.dysenteriae (MIC=20.0 ug/mL), A.cacoaceticus (MIC=60.0 ug/mL), P.aeruginosa (MIC=5.0 ug/mL) and C.albicans (MIC=5.0 ug/mL). Also shows a weak hemolytic activity. This is Temporin-ALi from Amolops loloensis (Lolokou Sucker Frog).